Reading from the N-terminus, the 204-residue chain is Inactive ribonuclease-like protein 9 (204 aa).

Positions 1-26 (MMRTPITTHPLLLLLLLQQLLQPVQF) are cleaved as a signal peptide. Intrachain disulfides connect C97–C152, C115–C167, and C122–C129. 2 N-linked (GlcNAc...) asparagine glycosylation sites follow: N130 and N142.

The protein belongs to the pancreatic ribonuclease family.

Its subcellular location is the secreted. Functionally, does not exhibit any ribonuclease activity. This Macaca nemestrina (Pig-tailed macaque) protein is Inactive ribonuclease-like protein 9 (RNASE9).